The chain runs to 258 residues: tRNA pseudouridine synthase A (258 aa).

Asp-52 acts as the Nucleophile in catalysis. Tyr-110 provides a ligand contact to substrate.

It belongs to the tRNA pseudouridine synthase TruA family. In terms of assembly, homodimer.

It carries out the reaction uridine(38/39/40) in tRNA = pseudouridine(38/39/40) in tRNA. Its function is as follows. Formation of pseudouridine at positions 38, 39 and 40 in the anticodon stem and loop of transfer RNAs. In Francisella tularensis subsp. holarctica (strain FTNF002-00 / FTA), this protein is tRNA pseudouridine synthase A.